The chain runs to 1511 residues: Pleiotropic ABC efflux transporter of multiple drugs (1511 aa).

Polar residues predominate over residues methionine 1–threonine 14. Positions methionine 1–tyrosine 32 are disordered. At methionine 1 to arginine 517 the chain is on the cytoplasmic side. Serine 22 is modified (phosphoserine). Threonine 49 and threonine 51 each carry phosphothreonine. The interval alanine 52 to isoleucine 71 is disordered. Serine 54, serine 58, and serine 61 each carry phosphoserine. An ABC transporter 1 domain is found at leucine 161–serine 410. A helical membrane pass occupies residues asparagine 518–phenylalanine 542. The Extracellular segment spans residues lysine 543–serine 558. The chain crosses the membrane as a helical span at residues alanine 559 to tyrosine 579. Residues glutamate 580 to lysine 611 are Cytoplasmic-facing. Residues leucine 612–phenylalanine 628 form a helical membrane-spanning segment. Residues arginine 629–asparagine 631 are Extracellular-facing. The chain crosses the membrane as a helical span at residues glycine 632–serine 650. Residues histidine 651–glutamate 665 are Cytoplasmic-facing. A helical membrane pass occupies residues alanine 666–isoleucine 685. Residues proline 686–glycine 774 lie on the Extracellular side of the membrane. Asparagine 734 carries an N-linked (GlcNAc...) asparagine glycan. A helical transmembrane segment spans residues phenylalanine 775 to cysteine 793. Residues glutamate 794–glutamine 1237 are Cytoplasmic-facing. A disordered region spans residues glutamate 824–glycine 858. Lysine 825 is covalently cross-linked (Glycyl lysine isopeptide (Lys-Gly) (interchain with G-Cter in ubiquitin)). The span at valine 833 to leucine 846 shows a compositional bias: basic and acidic residues. Phosphoserine occurs at positions 837, 840, 841, 849, 850, and 854. Residues phenylalanine 869–alanine 1112 form the ABC transporter 2 domain. Glycine 905–threonine 912 serves as a coordination point for ATP. The helical transmembrane segment at methionine 1238–valine 1260 threads the bilayer. The Extracellular segment spans residues glutamine 1261–proline 1291. A helical transmembrane segment spans residues tryptophan 1292–asparagine 1313. The Cytoplasmic portion of the chain corresponds to alanine 1314–glycine 1324. The helical transmembrane segment at alanine 1325–asparagine 1349 threads the bilayer. The Extracellular portion of the chain corresponds to glutamine 1350–serine 1354. Residues alanine 1355 to methionine 1379 traverse the membrane as a helical segment. At proline 1380–arginine 1388 the chain is on the cytoplasmic side. A helical transmembrane segment spans residues valine 1389–valine 1407. Over aspartate 1408–arginine 1476 the chain is Extracellular. Asparagine 1447 carries an N-linked (GlcNAc...) asparagine glycan. A helical membrane pass occupies residues asparagine 1477–alanine 1499. Topologically, residues arginine 1500–lysine 1511 are cytoplasmic.

This sequence belongs to the ABC transporter superfamily. ABCG family. PDR (TC 3.A.1.205) subfamily. Post-translationally, ubiquitinylation mediates endocytosis and vacuolar degradation. Phosphorylation by casein kinase I stabilizes the protein half-life.

The protein resides in the cell membrane. FK506, isonitrile, enniatin, RU49953, kitasatospora E420, staurosporine CGP42700, prenyl-flavonoids, D-octapeptides were found to be inhibitors in vivo. Vanadate and oligomycin were found to be inhibitors in vitro. Functionally, active efflux of weakly charged organic compounds of 90 cubic Angstroms to 300 cubic Angstroms surface volume. Confers resistance to numerous chemicals including cycloheximide, sulfomethuron methyl, steroids, antiseptics, antibiotics, anticancer, herbicides, mycotoxins, insecticides, ionophores, alkaloids, flavonoids, phenothiazines, organotin compounds, carbazoles, lysosomotropic aminoesters, detergents, rhodamines and other fluorophores, azoles and other antifungals. Exhibits nucleoside triphosphatase activity. This is Pleiotropic ABC efflux transporter of multiple drugs (PDR5) from Saccharomyces cerevisiae (strain ATCC 204508 / S288c) (Baker's yeast).